A 368-amino-acid polypeptide reads, in one-letter code: Peptide chain release factor 2 (368 aa).

The residue at position 249 (Q249) is an N5-methylglutamine.

Belongs to the prokaryotic/mitochondrial release factor family. Methylated by PrmC. Methylation increases the termination efficiency of RF2.

The protein resides in the cytoplasm. Functionally, peptide chain release factor 2 directs the termination of translation in response to the peptide chain termination codons UGA and UAA. This chain is Peptide chain release factor 2, found in Rhodococcus jostii (strain RHA1).